The primary structure comprises 509 residues: MEEFQRYIELDRSWQHNFFYPLIFQEYIYGFAYDHGLNKSILLENAGHKKYSLLIVKRLITRMYQQNHLLLSANHSNQNDFFGHKHKNYLYYQIISEGFAVITEIPFSLLLISSLEAKEKKIAKSHNLRSIHSIFPFFEDKFLHLNYVLKILIPYPIHLEILVQTLRYWVKDASSLHLLRFFLYEYRNWNSLITPQKSISIFSKKNQRLFLFLYNFHVCEYESIFVFLCNQSSHLRSTSFGALLERIYFYGKLEYLVKVKTFTKDFRLILWPFKDPFLHYVRYRGKSILASKGTSLLMYKWKYYLINFWQCHFSLWSQPRRIYINRLSKHSLDFMSFFSSVRLNSSVVRSQMVENSFLIDNPIKKFDTIVRIIPLVGSLAKAKFCNVLGHPVSKSVWTDLLDSDIIDRFGRICRNLSHYYSGSSRKKSLYRIKYILRLSCARTLARKHKSTVRAFLKRLGSEFLEEFFTEEEKVLSLILPRNSSISRGLYRGPLWYLDIICIHDLANDE.

The protein belongs to the intron maturase 2 family. MatK subfamily.

It localises to the plastid. Its subcellular location is the chloroplast. Its function is as follows. Usually encoded in the trnK tRNA gene intron. Probably assists in splicing its own and other chloroplast group II introns. This is Maturase K from Austrocylindropuntia vestita (Cactus).